A 78-amino-acid polypeptide reads, in one-letter code: MSTIEERVKKIIGEQLGVKQEEVTNNASFVEDLGADSLDTVELVMALEEEFDTEIPDEEAEKITTVQAAIDYINGHQA.

Residues 2 to 77 enclose the Carrier domain; it reads STIEERVKKI…AAIDYINGHQ (76 aa). S37 carries the post-translational modification O-(pantetheine 4'-phosphoryl)serine.

Belongs to the acyl carrier protein (ACP) family. 4'-phosphopantetheine is transferred from CoA to a specific serine of apo-ACP by AcpS. This modification is essential for activity because fatty acids are bound in thioester linkage to the sulfhydryl of the prosthetic group.

It localises to the cytoplasm. It participates in lipid metabolism; fatty acid biosynthesis. Functionally, carrier of the growing fatty acid chain in fatty acid biosynthesis. The polypeptide is Acyl carrier protein (Shigella flexneri).